We begin with the raw amino-acid sequence, 103 residues long: Histone H4 (103 aa).

Residues 1 to 14 (MSGRGKGGKGLGKG) are compositionally biased toward gly residues. Positions 1–20 (MSGRGKGGKGLGKGGAKRHR) are disordered. Ser-2 is subject to N-acetylserine. N6-acetyl-N6-methyllysine; alternate is present on residues Lys-6 and Lys-13. Residue Lys-17 is modified to N6-acetyllysine. Residues 17 to 21 (KRHRR) mediate DNA binding.

It belongs to the histone H4 family. As to quaternary structure, the nucleosome is a histone octamer containing two molecules each of H2A, H2B, H3 and H4 assembled in one H3-H4 heterotetramer and two H2A-H2B heterodimers. The octamer wraps approximately 147 bp of DNA.

It localises to the nucleus. The protein resides in the chromosome. Functionally, core component of nucleosome. Nucleosomes wrap and compact DNA into chromatin, limiting DNA accessibility to the cellular machineries which require DNA as a template. Histones thereby play a central role in transcription regulation, DNA repair, DNA replication and chromosomal stability. DNA accessibility is regulated via a complex set of post-translational modifications of histones, also called histone code, and nucleosome remodeling. The polypeptide is Histone H4 (Mytilus chilensis (Chilean blue mussel)).